Here is a 261-residue protein sequence, read N- to C-terminus: MFEARLVQGSILKKVLEALKDLIDEACWDITSSGISLQSMDSSHVSLVQLTLRSDGFDTYRCDRNQSIGVKMSSMSKILKCAASDDIITLRAEDNADTVTMVFESPNQEKVSDYEMKLMDLDVEQLGIPEQEYSCVIKMPSGEFARICRDLSQIGDAVVISCAKDGVKFSASGELGTGNVKLSQTSNVDKEEEAVTIEMNEPVQLTFALRYLNFFTKATPLSPTVILSMSADIPLVVEYKIADMEHVKYYLAPKIEDEEAS.

A DNA-binding region spans residues 61 to 80 (RCDRNQSIGVKMSSMSKILK). Lys-164 is covalently cross-linked (Glycyl lysine isopeptide (Lys-Gly) (interchain with G-Cter in ubiquitin)).

This sequence belongs to the PCNA family. In terms of assembly, homotrimer. Forms a complex with activator 1 heteropentamer in the presence of ATP. Component of the replisome complex. Interacts with apex2.L (via PIP box and GRF-type Zinc finger domain); the interaction is required for 3'-5' single-strand break (SSB) end resection, assembly of a checkpoint protein complex to SSB sites, and SSB signaling. In terms of processing, monoubiquitinated by the ube2b-rad18 complex on Lys-164. Monoubiquitination at Lys-164 also takes place in undamaged proliferating cells, and is mediated by the dcx(dtl) complex, leading to enhance PCNA-dependent translesion DNA synthesis.

The protein localises to the nucleus. Functionally, this protein is an auxiliary protein of DNA polymerase delta and is involved in the control of eukaryotic DNA replication by increasing the polymerase's processibility during elongation of the leading strand. Promotes 3'-5' nuclease activity of the DNA-endonuclease apex2.L in response to DNA damage. In Xenopus laevis (African clawed frog), this protein is Proliferating cell nuclear antigen (pcna).